The following is a 358-amino-acid chain: MHHQWLLLAACFWVIFMFMVASKFITLTFKDPDGYGAKQEPLILTAVTKVEEARVPEEKHWTKEFQPTGKAFTGNLLHHPLVHMERLELLRNVCRDTALRNLSHTAVSKFVLDRIFVCDKHKILFCQTPKVGNTQWKKVLIVLNGAYSSIDEIPESIVHDHEKNGLPRLSSFSDSEIKKRLNLYFKFFIVRDPFERLISAFKDKFVHNPRFEPWYRHEIAPSIIRKYRRNRMETKGLQFEDFVRYLGDPNHRWLDVQFGDHIIHWVTYVELCAPCEITYSVIGHHETLEDDAPYILKAAGIDRLVSYPTIPPGITVYNKTKVERYFSGISKRDIRRLYARFEGDFKLFGYRVPDFLLN.

The Cytoplasmic portion of the chain corresponds to 1-6 (MHHQWL). A helical; Signal-anchor for type II membrane protein membrane pass occupies residues 7-27 (LLAACFWVIFMFMVASKFITL). Residues 28–358 (TFKDPDGYGA…GYRVPDFLLN (331 aa)) are Lumenal-facing. Residue Asn-101 is glycosylated (N-linked (GlcNAc...) asparagine). 3'-phosphoadenylyl sulfate-binding positions include 129–135 (PKVGNTQ) and 191–199 (RDPFERLIS). N-linked (GlcNAc...) asparagine glycosylation occurs at Asn-318.

This sequence belongs to the sulfotransferase 2 family. In terms of tissue distribution, predominantly expressed in hypertrophic, prehypertrophic and proliferative chondrocytes at E12 but is down-regulated in epiphyseal chondrocytes.

It localises to the golgi apparatus membrane. Its function is as follows. Catalyzes the transfer of sulfate to position 3 of terminal glucuronic acid of both protein- and lipid-linked oligosaccharides. Participates in biosynthesis of HNK-1 carbohydrate structure, a sulfated glucuronyl-lactosaminyl residue carried by many neural recognition molecules, which is involved in cell interactions during ontogenetic development and in synaptic plasticity in the adult. The chain is Carbohydrate sulfotransferase 10 (CHST10) from Gallus gallus (Chicken).